Here is a 73-residue protein sequence, read N- to C-terminus: uncharacterized protein (73 aa).

An N-terminal signal peptide occupies residues 1–21; it reads MTLFSSLSSLSTGSLKSSVSS. The segment covering 1 to 38 has biased composition (low complexity); it reads MTLFSSLSSLSTGSLKSSVSSIETGSSSGSFGSNETSG. The segment at 1–43 is disordered; the sequence is MTLFSSLSSLSTGSLKSSVSSIETGSSSGSFGSNETSGWGSHH. A glycan (N-linked (GlcNAc...) asparagine) is linked at Asn-34.

The protein localises to the secreted. This is an uncharacterized protein from Dictyostelium discoideum (Social amoeba).